The chain runs to 147 residues: Hemoglobin subunit gamma (147 aa).

Positions 3–147 (NFTAEDKAAI…VASALASRYH (145 aa)) constitute a Globin domain. Histidine 64 and histidine 93 together coordinate heme b.

It belongs to the globin family. In terms of assembly, heterotetramer of two alpha chains and two gamma chains in fetal hemoglobin (Hb F). As to expression, red blood cells.

Gamma chains make up the fetal hemoglobin F, in combination with alpha chains. This chain is Hemoglobin subunit gamma (HBG), found in Alouatta seniculus (Red howler monkey).